We begin with the raw amino-acid sequence, 200 residues long: LexA repressor (200 aa).

The H-T-H motif DNA-binding region spans 28–48 (RAEISNRLGFRSANAAEEHLK). Active-site for autocatalytic cleavage activity residues include Ser-121 and Lys-158.

Belongs to the peptidase S24 family. As to quaternary structure, homodimer.

The catalysed reaction is Hydrolysis of Ala-|-Gly bond in repressor LexA.. In terms of biological role, represses a number of genes involved in the response to DNA damage (SOS response), including recA and lexA. In the presence of single-stranded DNA, RecA interacts with LexA causing an autocatalytic cleavage which disrupts the DNA-binding part of LexA, leading to derepression of the SOS regulon and eventually DNA repair. The sequence is that of LexA repressor from Hahella chejuensis (strain KCTC 2396).